A 558-amino-acid chain; its full sequence is Membrane protein insertase YidC (558 aa).

5 helical membrane-spanning segments follow: residues 6–26 (SFFIIVFLIVSFILWKIWDDE), 359–379 (FIHTYTIDNWGISIILITVII), 434–454 (LGGCLPLLIQMPIFLALYYML), 480–500 (ILPIIMGITMFFIQKLSPTTI), and 513–533 (LVIFTIFFLWFPSGLVLYYII).

Belongs to the OXA1/ALB3/YidC family. Type 1 subfamily. In terms of assembly, interacts with the Sec translocase complex via SecD. Specifically interacts with transmembrane segments of nascent integral membrane proteins during membrane integration.

The protein resides in the cell inner membrane. Required for the insertion and/or proper folding and/or complex formation of integral membrane proteins into the membrane. Involved in integration of membrane proteins that insert both dependently and independently of the Sec translocase complex, as well as at least some lipoproteins. Aids folding of multispanning membrane proteins. This chain is Membrane protein insertase YidC, found in Blochmanniella floridana.